A 115-amino-acid polypeptide reads, in one-letter code: MGTRLLCWAALCLLGADHTGAGVSQTPSNKVTEKGKDVELRCDPISGHTALYWYRQSLGQGPEFLIYFQGTGAADDSGLPKDRFFAVRPEGSVSTLKIQRTEQGDSAAYLRASSL.

The signal sequence occupies residues M1–A21. An Ig-like domain is found at G22 to L115.

As to quaternary structure, most probably, the alpha-beta TR is not assembled due to incorrect folding of the beta chain. Alpha-beta TR is a heterodimer composed of an alpha and beta chain; disulfide-linked. The alpha-beta TR is associated with the transmembrane signaling CD3 coreceptor proteins to form the TR-CD3 (TcR or TCR). The assembly of alpha-beta TR heterodimers with CD3 occurs in the endoplasmic reticulum where a single alpha-beta TR heterodimer associates with one CD3D-CD3E heterodimer, one CD3G-CD3E heterodimer and one CD247 homodimer forming a stable octameric structure. CD3D-CD3E and CD3G-CD3E heterodimers preferentially associate with TR alpha and TR beta chains, respectively. The association of the CD247 homodimer is the last step of TcR assembly in the endoplasmic reticulum and is required for transport to the cell surface.

The protein resides in the cell membrane. In terms of biological role, probable non-functional open reading frame (ORF) of V region of the variable domain of T cell receptor (TR) beta chain. Non-functional ORF generally cannot participate in the synthesis of a productive T cell receptor (TR) chain due to altered V-(D)-J or switch recombination and/or splicing site (at mRNA level) and/or conserved amino acid change (protein level). Alpha-beta T cell receptors are antigen specific receptors which are essential to the immune response and are present on the cell surface of T lymphocytes. Recognize peptide-major histocompatibility (MH) (pMH) complexes that are displayed by antigen presenting cells (APC), a prerequisite for efficient T cell adaptive immunity against pathogens. Binding of alpha-beta TR to pMH complex initiates TR-CD3 clustering on the cell surface and intracellular activation of LCK that phosphorylates the ITAM motifs of CD3G, CD3D, CD3E and CD247 enabling the recruitment of ZAP70. In turn ZAP70 phosphorylates LAT, which recruits numerous signaling molecules to form the LAT signalosome. The LAT signalosome propagates signal branching to three major signaling pathways, the calcium, the mitogen-activated protein kinase (MAPK) kinase and the nuclear factor NF-kappa-B (NF-kB) pathways, leading to the mobilization of transcription factors that are critical for gene expression and essential for T cell growth and differentiation. The T cell repertoire is generated in the thymus, by V-(D)-J rearrangement. This repertoire is then shaped by intrathymic selection events to generate a peripheral T cell pool of self-MH restricted, non-autoaggressive T cells. Post-thymic interaction of alpha-beta TR with the pMH complexes shapes TR structural and functional avidity. The sequence is that of Probable non-functional T cell receptor beta variable 7-3 from Homo sapiens (Human).